The following is a 407-amino-acid chain: Aminomethyltransferase, mitochondrial (407 aa).

Residues Met-1–Tyr-29 constitute a mitochondrion transit peptide. Substrate is bound by residues Glu-234, Arg-265, and Tyr-403.

The protein belongs to the GcvT family. The glycine cleavage system is composed of four proteins: P, T, L and H.

Its subcellular location is the mitochondrion. The catalysed reaction is N(6)-[(R)-S(8)-aminomethyldihydrolipoyl]-L-lysyl-[protein] + (6S)-5,6,7,8-tetrahydrofolate = N(6)-[(R)-dihydrolipoyl]-L-lysyl-[protein] + (6R)-5,10-methylene-5,6,7,8-tetrahydrofolate + NH4(+). The glycine cleavage system catalyzes the degradation of glycine. The chain is Aminomethyltransferase, mitochondrial (GDCST) from Flaveria anomala (Yellowtops).